An 805-amino-acid polypeptide reads, in one-letter code: Arginine/serine-rich protein PNISR (805 aa).

Over residues 74 to 88 (PNNHGNFQGDSNFNR) the composition is skewed to polar residues. Disordered stretches follow at residues 74 to 331 (PNNH…EEKE) and 382 to 805 (LTGL…SRSR). Composition is skewed to pro residues over residues 100–115 (PPHP…PTPG) and 183–195 (YWQP…PAPP). A compositionally biased stretch (basic and acidic residues) spans 197–210 (NRRERPSSFRDRQR). 2 positions are modified to phosphoserine: serine 204 and serine 211. Lysine 218 is covalently cross-linked (Glycyl lysine isopeptide (Lys-Gly) (interchain with G-Cter in SUMO2)). A coiled-coil region spans residues 237–276 (REGLEKMEREKQKKLEKERMEQQRSQLSKKEKKATEDAEG). A compositionally biased stretch (basic and acidic residues) spans 238 to 258 (EGLEKMEREKQKKLEKERMEQ). Phosphoserine is present on residues serine 290, serine 304, serine 313, and serine 321. A compositionally biased stretch (acidic residues) spans 290-299 (SDEEEEDTEN). A compositionally biased stretch (gly residues) spans 384–393 (GLGGLGGYGS). Residues 421–463 (QKQEAFWRKEKEQQLLHDKQMEEEKQQTERVTKEMNEFIHKEQ) are compositionally biased toward basic and acidic residues. Residues 429 to 461 (KEKEQQLLHDKQMEEEKQQTERVTKEMNEFIHK) adopt a coiled-coil conformation. Residues serine 465 and serine 467 each carry the phosphoserine modification. Composition is skewed to basic and acidic residues over residues 470–486 (EARE…KRTP) and 494–506 (EPKK…EKQG). Residue threonine 485 is modified to Phosphothreonine. Lysine 496 participates in a covalent cross-link: Glycyl lysine isopeptide (Lys-Gly) (interchain with G-Cter in SUMO2). The segment covering 508-550 (SRSGSSSSGSSSSNSRTSSTSSTVSSSSYSSSSGSSRTSSRSS) has biased composition (low complexity). Composition is skewed to basic residues over residues 551 to 579 (SPKR…YSRR), 587 to 598 (ARVKIRDRRRSN), and 607 to 639 (RRNR…SRDR). Residues 659–721 (EAKEQERKKE…KRKRESERTF (63 aa)) show a composition bias toward basic and acidic residues. The stretch at 673–703 (IDKDRKKKDKEREREQDKRKEKQKREEKDFK) forms a coiled coil. Lysine 703 is covalently cross-linked (Glycyl lysine isopeptide (Lys-Gly) (interchain with G-Cter in SUMO2)). Serine 726 is subject to Phosphoserine. Residues 732 to 753 (IRHDSRQDSKKSTTKDSKKHSG) are compositionally biased toward basic and acidic residues. Positions 754-767 (SDSSGRSSSESPGS) are enriched in low complexity. Basic residues-rich tracts occupy residues 771–781 (KKAKKPKHSRS) and 789–805 (RSGK…SRSR).

This sequence belongs to the splicing factor SR family. Interacts with PNN. Expressed in heart, skeletal muscle, thymus, spleen, kidney, liver, placenta and leukocytes.

Its subcellular location is the nucleus speckle. This chain is Arginine/serine-rich protein PNISR (PNISR), found in Homo sapiens (Human).